The primary structure comprises 958 residues: Protein translocase subunit SecA (958 aa).

ATP is bound by residues glutamine 86, glycine 104–threonine 108, and aspartate 494. Disordered stretches follow at residues alanine 863–threonine 883 and glutamine 902–lysine 937. Zn(2+) is bound by residues cysteine 941, cysteine 943, cysteine 952, and histidine 953.

The protein belongs to the SecA family. In terms of assembly, monomer and homodimer. Part of the essential Sec protein translocation apparatus which comprises SecA, SecYEG and auxiliary proteins SecDF. Other proteins may also be involved. Requires Zn(2+) as cofactor.

The protein localises to the cell membrane. The protein resides in the cytoplasm. The enzyme catalyses ATP + H2O + cellular proteinSide 1 = ADP + phosphate + cellular proteinSide 2.. Functionally, part of the Sec protein translocase complex. Interacts with the SecYEG preprotein conducting channel. Has a central role in coupling the hydrolysis of ATP to the transfer of proteins into and across the cell membrane, serving as an ATP-driven molecular motor driving the stepwise translocation of polypeptide chains across the membrane. The protein is Protein translocase subunit SecA of Bifidobacterium adolescentis (strain ATCC 15703 / DSM 20083 / NCTC 11814 / E194a).